The chain runs to 535 residues: MDNMELCEANNVPLTPITFLKRASECYPNRTSIIYGQTRFTWPQTYDRCCRLAASLISLNIAKNDVVSVVAPNTPAIYEMHFAVPMAGAVLNPINTRLDATSITTILRHAQPKILFIHRNFEPLAREILHLLSCDDLQLNLLVIFIDEYNSAKRVSSEELDYESLIQMGEPTSPLVENMFRIQNEQDPISLNYTSGTTADPKGVVISHRGAYLTSLGVIIGWEMSTCPVYLWIFAYVSLQWMDVYMGNSSARGHQCVYEPRNPLDMSHRSGPVHLMTGGSPLPAALVKKVQRLGFQVLHVYGLTEATGPALFCEWQDEWNRLTENQQMELKARQGLGILSVAEVDVKYNETQESVPHDGKTMGEIVMKGNNIMKGYLKNSKATFEAFKHGWLNTGDVGVIHPDGHIEIKDRSKDIIISGGENISSVEVENILYKHPRVFEVAVVAMPHRVWGETPCAFIVLQKGETNKEDDEYKFVAREKELIDYCRENLPHFMCPRKVVFLEELPKNGNGKILKPNLRAITKGLVAEDEANVIS.

Belongs to the ATP-dependent AMP-binding enzyme family.

In terms of biological role, may act as an acid--thiol ligase that activates carboxylic acids by forming acyl-CoAs. The chain is Probable acyl-activating enzyme 22 (AEE22) from Arabidopsis thaliana (Mouse-ear cress).